We begin with the raw amino-acid sequence, 146 residues long: Large ribosomal subunit protein bL9 (146 aa).

Belongs to the bacterial ribosomal protein bL9 family.

In terms of biological role, binds to the 23S rRNA. The protein is Large ribosomal subunit protein bL9 of Flavobacterium johnsoniae (strain ATCC 17061 / DSM 2064 / JCM 8514 / BCRC 14874 / CCUG 350202 / NBRC 14942 / NCIMB 11054 / UW101) (Cytophaga johnsonae).